The following is a 150-amino-acid chain: Cytosine deaminase (150 aa).

The 119-residue stretch at 3–121 (FDDKKGLQVA…KLLIENGVEV (119 aa)) folds into the CMP/dCMP-type deaminase domain. Residue Asn44 participates in substrate binding. His55 is a binding site for Zn(2+). The active-site Proton donor is Glu57. Zn(2+) contacts are provided by Cys84 and Cys87. Asp147 provides a ligand contact to substrate.

Belongs to the cytidine and deoxycytidylate deaminase family. Homodimer. Requires Zn(2+) as cofactor.

It is found in the cytoplasm. Its subcellular location is the nucleus. The enzyme catalyses cytosine + H2O + H(+) = uracil + NH4(+). Its pathway is pyrimidine metabolism; UMP biosynthesis via salvage pathway; uracil from cytosine: step 1/1. Catalyzes the hydrolytic deamination of cytosine to uracil or 5-methylcytosine to thymine. Is involved in the pyrimidine salvage pathway, which allows the cell to utilize cytosine for pyrimidine nucleotide synthesis. The sequence is that of Cytosine deaminase from Candida albicans (strain SC5314 / ATCC MYA-2876) (Yeast).